The primary structure comprises 300 residues: UDP-3-O-acyl-N-acetylglucosamine deacetylase (300 aa).

Zn(2+) is bound by residues H78, H237, and D241. The Proton donor role is filled by H264.

This sequence belongs to the LpxC family. Requires Zn(2+) as cofactor.

It catalyses the reaction a UDP-3-O-[(3R)-3-hydroxyacyl]-N-acetyl-alpha-D-glucosamine + H2O = a UDP-3-O-[(3R)-3-hydroxyacyl]-alpha-D-glucosamine + acetate. It participates in glycolipid biosynthesis; lipid IV(A) biosynthesis; lipid IV(A) from (3R)-3-hydroxytetradecanoyl-[acyl-carrier-protein] and UDP-N-acetyl-alpha-D-glucosamine: step 2/6. Its function is as follows. Catalyzes the hydrolysis of UDP-3-O-myristoyl-N-acetylglucosamine to form UDP-3-O-myristoylglucosamine and acetate, the committed step in lipid A biosynthesis. This Acinetobacter baumannii (strain SDF) protein is UDP-3-O-acyl-N-acetylglucosamine deacetylase.